A 120-amino-acid polypeptide reads, in one-letter code: U13-barytoxin-Tl1a (120 aa).

The N-terminal stretch at M1–A20 is a signal peptide. 3 cysteine pairs are disulfide-bonded: C75–C90, C82–C95, and C89–C109.

Belongs to the neurotoxin 14 (magi-1) family. 05 (ICK-7) subfamily. ICK-7 sub-subfamily. Expressed by the venom gland.

It localises to the secreted. Its function is as follows. Ion channel inhibitor. The protein is U13-barytoxin-Tl1a of Trittame loki (Brush-footed trapdoor spider).